The primary structure comprises 339 residues: Nicotinate-nucleotide--dimethylbenzimidazole phosphoribosyltransferase (339 aa).

Glutamate 306 serves as the catalytic Proton acceptor.

This sequence belongs to the CobT family.

It carries out the reaction 5,6-dimethylbenzimidazole + nicotinate beta-D-ribonucleotide = alpha-ribazole 5'-phosphate + nicotinate + H(+). It functions in the pathway nucleoside biosynthesis; alpha-ribazole biosynthesis; alpha-ribazole from 5,6-dimethylbenzimidazole: step 1/2. In terms of biological role, catalyzes the synthesis of alpha-ribazole-5'-phosphate from nicotinate mononucleotide (NAMN) and 5,6-dimethylbenzimidazole (DMB). The sequence is that of Nicotinate-nucleotide--dimethylbenzimidazole phosphoribosyltransferase from Brucella melitensis biotype 1 (strain ATCC 23456 / CCUG 17765 / NCTC 10094 / 16M).